Consider the following 221-residue polypeptide: Histone H1C (221 aa).

Disordered stretches follow at residues M1–S43 and A113–A221. The H15 domain occupies T38–A112. Basic residues-rich tracts occupy residues K141–K167 and A175–A221.

Belongs to the histone H1/H5 family.

It localises to the nucleus. It is found in the chromosome. Histones H1 are necessary for the condensation of nucleosome chains into higher-order structures. This is Histone H1C from Chironomus tentans (Midge).